We begin with the raw amino-acid sequence, 335 residues long: Trans-1,2-dihydrobenzene-1,2-diol dehydrogenase (335 aa).

It belongs to the Gfo/Idh/MocA family. Homodimer.

It catalyses the reaction (1R,2R)-1,2-dihydrobenzene-1,2-diol + NADP(+) = catechol + NADPH + H(+). The enzyme catalyses D-xylose + NADP(+) = D-xylono-1,5-lactone + NADPH + H(+). This Bos taurus (Bovine) protein is Trans-1,2-dihydrobenzene-1,2-diol dehydrogenase (DHDH).